We begin with the raw amino-acid sequence, 751 residues long: Cellulose synthase-like protein G3 (751 aa).

The next 2 membrane-spanning stretches (helical) occupy residues 47–67 and 72–92; these read IYAV…VHSL and TTLI…MWAT. Active-site residues include aspartate 161 and aspartate 466. The next 6 helical transmembrane spans lie at 543 to 563, 577 to 597, 617 to 639, 674 to 694, 697 to 717, and 731 to 751; these read CWAF…LALL, FWLY…DFVL, FSSH…THGF, TVAI…FAWG, LVLE…IYEA, and VCFV…VFLK.

Belongs to the glycosyltransferase 2 family. Plant cellulose synthase-like G subfamily.

Its subcellular location is the golgi apparatus membrane. In terms of biological role, thought to be a Golgi-localized beta-glycan synthase that polymerize the backbones of noncellulosic polysaccharides (hemicelluloses) of plant cell wall. The protein is Cellulose synthase-like protein G3 (CSLG3) of Arabidopsis thaliana (Mouse-ear cress).